A 470-amino-acid polypeptide reads, in one-letter code: ATP synthase subunit beta (470 aa).

An ATP-binding site is contributed by 155 to 162 (GGAGVGKT).

Belongs to the ATPase alpha/beta chains family. In terms of assembly, F-type ATPases have 2 components, CF(1) - the catalytic core - and CF(0) - the membrane proton channel. CF(1) has five subunits: alpha(3), beta(3), gamma(1), delta(1), epsilon(1). CF(0) has three main subunits: a(1), b(2) and c(9-12). The alpha and beta chains form an alternating ring which encloses part of the gamma chain. CF(1) is attached to CF(0) by a central stalk formed by the gamma and epsilon chains, while a peripheral stalk is formed by the delta and b chains.

The protein localises to the cell membrane. The catalysed reaction is ATP + H2O + 4 H(+)(in) = ADP + phosphate + 5 H(+)(out). Functionally, produces ATP from ADP in the presence of a proton gradient across the membrane. The catalytic sites are hosted primarily by the beta subunits. The protein is ATP synthase subunit beta of Staphylococcus aureus (strain MW2).